We begin with the raw amino-acid sequence, 243 residues long: uncharacterized protein (243 aa).

This is an uncharacterized protein from Caenorhabditis elegans.